A 706-amino-acid chain; its full sequence is Polyribonucleotide nucleotidyltransferase (706 aa).

The Mg(2+) site is built by Asp-485 and Asp-491. The KH domain occupies 552–611; that stretch reads PRMLKMKIHPDKIREVIGSGGKTINKIIEDTGVKIDIENDGTIFIAAQTQEAGELALSII. The S1 motif domain occupies 621–689; the sequence is GDIFKGKVIK…QQGKVSLSRK (69 aa).

The protein belongs to the polyribonucleotide nucleotidyltransferase family. Mg(2+) serves as cofactor.

The protein localises to the cytoplasm. The enzyme catalyses RNA(n+1) + phosphate = RNA(n) + a ribonucleoside 5'-diphosphate. Functionally, involved in mRNA degradation. Catalyzes the phosphorolysis of single-stranded polyribonucleotides processively in the 3'- to 5'-direction. The sequence is that of Polyribonucleotide nucleotidyltransferase from Alkaliphilus oremlandii (strain OhILAs) (Clostridium oremlandii (strain OhILAs)).